A 963-amino-acid polypeptide reads, in one-letter code: Low-density lipoprotein receptor-related protein 8 (963 aa).

A signal peptide spans 1–32 (MGLPEPGPLRLLALLLLLLLLLLLQLQHLAAA). The Extracellular portion of the chain corresponds to 42–826 (GPAKDCEKDQ…SKMGSTVTAA (785 aa)). 7 LDL-receptor class A domains span residues 46–82 (DCEK…DDCP), 85–123 (TCAD…ATCT), 126–164 (VCPA…AGCA), 166–202 (LCAP…RGCA), 205–246 (ACGP…ELCG), 258–295 (ACAT…ADCP), and 298–334 (TCRG…AGCL). Intrachain disulfides connect Cys47–Cys59, Cys54–Cys72, Cys66–Cys81, Cys86–Cys98, Cys93–Cys111, Cys105–Cys122, Cys127–Cys141, Cys134–Cys154, Cys148–Cys163, Cys167–Cys179, Cys174–Cys192, Cys186–Cys201, Cys206–Cys221, Cys213–Cys234, Cys228–Cys245, Cys259–Cys272, Cys267–Cys285, Cys279–Cys294, Cys299–Cys311, Cys306–Cys324, Cys318–Cys333, Cys340–Cys351, Cys347–Cys360, Cys362–Cys374, Cys380–Cys390, Cys386–Cys399, and Cys401–Cys414. Trp64, Asp67, Asp69, Asp71, Asp77, and Glu78 together coordinate Ca(2+). A glycan (N-linked (GlcNAc...) asparagine) is linked at Asn176. The EGF-like 1 domain maps to 336–375 (GLNECLHNNGGCSHICTDLKIGFECTCPAGFQLLDQKTCG). Positions 376-415 (DIDECKDPDACSQICVNYKGYFKCECYPGYEMDLLTKNCK) constitute an EGF-like 2; calcium-binding domain. The N-linked (GlcNAc...) asparagine glycan is linked to Asn441. 5 LDL-receptor class B repeats span residues 462 to 508 (NRIY…DWVH), 509 to 551 (KHIY…DPLR), 552 to 595 (GFMY…DLLS), 596 to 639 (QRLY…VFED), and 640 to 681 (KVFW…FHEL). Asn518 and Asn538 each carry an N-linked (GlcNAc...) asparagine glycan. Positions 740-798 (STSTTTLASTMTRTVPATTRAPGTTVHRSTYQNHSTETPSLTAAVPSSVSVPRAPSISP) are clustered O-linked oligosaccharides. The disordered stretch occupies residues 754-815 (VPATTRAPGT…SNHSQHYANE (62 aa)). The segment covering 765–777 (VHRSTYQNHSTET) has biased composition (polar residues). Residue Asn772 is glycosylated (N-linked (GlcNAc...) asparagine). A compositionally biased stretch (low complexity) spans 778–799 (PSLTAAVPSSVSVPRAPSISPS). Polar residues predominate over residues 800 to 812 (TLSPATSNHSQHY). Asn807 is a glycosylation site (N-linked (GlcNAc...) asparagine). A helical membrane pass occupies residues 827–847 (VIGIIVPIVVIALLCMSGYLI). Over 848 to 963 (WRNWKRKNTK…ALSLEDDGLP (116 aa)) the chain is Cytoplasmic.

It belongs to the LDLR family. Homooligomer. Interacts with VLDLR. Reelin associates with two or more receptor molecules. Interacts with DAB1 and JNK-interacting proteins. Interacts with SNX17. Interacts with PCSK9. Interacts with MDK; this interaction is calcium dependent. Interacts with CLU. In terms of assembly, (Microbial infection) Interacts with Semliki Forest virus E2-E1 heterodimer; this interaction mediates viral entry to host cell. As to quaternary structure, (Microbial infection) Interacts (via class A repeats) with Eastern equine encephalitis virus spike glycoprotein E2; this interaction mediates viral entry into host cell. In terms of processing, O-glycosylated. Some alternatively spliced isoforms lack the O-linked sugar domain. Undergoes sequential, furin and gamma-secretase dependent, proteolytic processing, resulting in the extracellular release of the entire ligand-binding domain as a soluble polypeptide and in the intracellular domain (ICD) release into the cytoplasm. The gamma-secretase-dependent proteolytical processing occurs after the bulk of the extracellular domain has been shed, in a furin-dependent manner, in alternatively spliced isoforms carrying the furin cleavage site. Hypoglycosylation (mainly hypo-O-glycosylation) leads to increased extracellular cleavage, which in turn results in accelerating release of the intracellular domain (ICD) by the gamma-secretase. The resulting receptor fragment is able to inhibit Reelin signaling and in particular the Reelin-induced DAB1 phosphorylation. Post-translationally, tyrosine phosphorylated upon apoE binding. In terms of processing, ubiquitinated by MYLIP leading to degradation. In terms of tissue distribution, expressed mainly in brain and placenta. Also expressed in platelets and megakaryocytic cells. Not expressed in the liver.

It is found in the cell membrane. The protein resides in the secreted. In terms of biological role, cell surface receptor for Reelin (RELN) and apolipoprotein E (apoE)-containing ligands. LRP8 participates in transmitting the extracellular Reelin signal to intracellular signaling processes, by binding to DAB1 on its cytoplasmic tail. Reelin acts via both the VLDL receptor (VLDLR) and LRP8 to regulate DAB1 tyrosine phosphorylation and microtubule function in neurons. LRP8 has higher affinity for Reelin than VLDLR. LRP8 is thus a key component of the Reelin pathway which governs neuronal layering of the forebrain during embryonic brain development. Binds the endoplasmic reticulum resident receptor-associated protein (RAP). Binds dimers of beta 2-glycoprotein I and may be involved in the suppression of platelet aggregation in the vasculature. Highly expressed in the initial segment of the epididymis, where it affects the functional expression of clusterin and phospholipid hydroperoxide glutathione peroxidase (PHGPx), two proteins required for sperm maturation. May also function as an endocytic receptor. Not required for endocytic uptake of SEPP1 in the kidney which is mediated by LRP2. Together with its ligand, apolipoprotein E (apoE), may indirectly play a role in the suppression of the innate immune response by controlling the survival of myeloid-derived suppressor cells. (Microbial infection) Acts as a receptor for Semliki Forest virus. This is Low-density lipoprotein receptor-related protein 8 (LRP8) from Homo sapiens (Human).